The chain runs to 626 residues: 5'-AMP-activated protein kinase catalytic subunit alpha-2 (626 aa).

Residues 1 to 24 are compositionally biased toward basic and acidic residues; the sequence is MFSHQDRDRDRKEDGGGDGTEMKS. Positions 1–77 are disordered; it reads MFSHQDRDRD…GETSTKQQQE (77 aa). Over residues 38-49 the composition is skewed to basic residues; that stretch reads NLSRKLSAKSRK. A compositionally biased stretch (polar residues) spans 58–77; it reads DNSSKMSSPGGETSTKQQQE. One can recognise a Protein kinase domain in the interval 87-339; the sequence is YILKETLGVG…IKDVIAHEWF (253 aa). Residues 93 to 101 and Lys-116 each bind ATP; that span reads LGVGTFGKV. Asp-210 (proton acceptor) is an active-site residue. Thr-243 carries the post-translational modification Phosphothreonine; by par-4. The tract at residues 541-568 is disordered; sequence SGSASASSSRHASMSMPQKPAGIRGTRT. The span at 542 to 555 shows a compositional bias: low complexity; it reads GSASASSSRHASMS.

The protein belongs to the protein kinase superfamily. CAMK Ser/Thr protein kinase family. SNF1 subfamily. In terms of assembly, tetramer, composed of 2 regulatory (R) and 2 catalytic (C) subunits. In the presence of cAMP it dissociates into 2 active monomeric C subunits and an R dimer that binds four cAMP molecules. Phosphorylated on Thr-243 in response to oxidative stress and during dauer development. Phosphorylation at Thr-243 is increased in response to sodium azide or the AMP analog AICAR (5-amino-1-(5-phospho-beta-D-ribosyl)imidazole-4-carboxamide). Expressed in the pharynx, the ventral cord, neurons including the hermaphrodite-specific neuron, body wall muscles, the vulva, the excretory canal, and weakly in the intestine.

The enzyme catalyses L-seryl-[protein] + ATP = O-phospho-L-seryl-[protein] + ADP + H(+). It carries out the reaction L-threonyl-[protein] + ATP = O-phospho-L-threonyl-[protein] + ADP + H(+). Activated by phosphorylation. In terms of biological role, acts as a sensor that couples lifespan to information about energy levels and insulin-like signals. Role in motility and response to oxidative stress. Involved in the establishment of germline stem cell (GSC) quiescence during dauer development. Plays a role in axon regrowth after axotomy in PLM neurons. Plays a role in the maintenance of glycogen stores which are necessary for resistance to hyperosmotic stress. Plays a role in the regulation of flp-7 secretion from ASI neurons. Keeps the CREB-regulated transcription coactivator 1 homolog crtc-1 inactive which in turn inhibits flp-7 secretion. Following serotonin signaling, derepresses crtc-1 which stimulates flp-7 secretion and subsequent body fat loss. This chain is 5'-AMP-activated protein kinase catalytic subunit alpha-2, found in Caenorhabditis elegans.